The chain runs to 200 residues: 3-isopropylmalate dehydratase small subunit (200 aa).

The protein belongs to the LeuD family. LeuD type 1 subfamily. In terms of assembly, heterodimer of LeuC and LeuD.

It catalyses the reaction (2R,3S)-3-isopropylmalate = (2S)-2-isopropylmalate. Its pathway is amino-acid biosynthesis; L-leucine biosynthesis; L-leucine from 3-methyl-2-oxobutanoate: step 2/4. In terms of biological role, catalyzes the isomerization between 2-isopropylmalate and 3-isopropylmalate, via the formation of 2-isopropylmaleate. In Haemophilus influenzae (strain PittEE), this protein is 3-isopropylmalate dehydratase small subunit.